A 331-amino-acid polypeptide reads, in one-letter code: RNA/RNP complex-1-interacting phosphatase (331 aa).

The Tyrosine-protein phosphatase domain maps to 61–208 (FEKHLAPEEC…LRNGPIRKNW (148 aa)). The Phosphocysteine intermediate role is filled by cysteine 152. Residue 153–158 (THGVNR) participates in substrate binding. Arginine 158 functions as the Proton donor/acceptor in the catalytic mechanism.

The protein belongs to the protein-tyrosine phosphatase family. Non-receptor class dual specificity subfamily. In terms of assembly, monomer. May interact with SFRS7 and SFRS9/SRP30C.

The protein resides in the nucleus. The protein localises to the nucleus speckle. Possesses RNA 5'-triphosphatase and diphosphatase activities, but displays a poor protein-tyrosine phosphatase activity. In addition, has phosphatase activity with ATP, ADP and O-methylfluorescein phosphate (in vitro). Binds to RNA. May participate in nuclear mRNA metabolism. In Bos taurus (Bovine), this protein is RNA/RNP complex-1-interacting phosphatase (DUSP11).